Reading from the N-terminus, the 310-residue chain is Protein translocase subunit SecF (310 aa).

6 consecutive transmembrane segments (helical) span residues 20 to 42 (FKKVSYTFSIILSLISVISIGIY), 140 to 160 (IEAGTMAMLFSFLAIMVYIWV), 164 to 184 (WYFGLGILIALMHDLILALGF), 194 to 214 (LSTIAAVLTIIGYSVNDSVVI), 246 to 266 (ILTVITTLLANLALILFGGEA), and 272 to 292 (VLVFFGIIAGTYSSIFISAPI).

Belongs to the SecD/SecF family. SecF subfamily. In terms of assembly, forms a complex with SecD. Part of the essential Sec protein translocation apparatus which comprises SecA, SecYEG and auxiliary proteins SecDF-YajC and YidC.

Its subcellular location is the cell inner membrane. Its function is as follows. Part of the Sec protein translocase complex. Interacts with the SecYEG preprotein conducting channel. SecDF uses the proton motive force (PMF) to complete protein translocation after the ATP-dependent function of SecA. This is Protein translocase subunit SecF from Rickettsia canadensis (strain McKiel).